Consider the following 353-residue polypeptide: Methylthioribose-1-phosphate isomerase (353 aa).

Residues 51–53 (RGA), Arg-94, and Gln-199 contribute to the substrate site. Catalysis depends on Asp-240, which acts as the Proton donor. Position 250–251 (250–251 (NK)) interacts with substrate.

The protein belongs to the eIF-2B alpha/beta/delta subunits family. MtnA subfamily. As to quaternary structure, homodimer.

The catalysed reaction is 5-(methylsulfanyl)-alpha-D-ribose 1-phosphate = 5-(methylsulfanyl)-D-ribulose 1-phosphate. Its pathway is amino-acid biosynthesis; L-methionine biosynthesis via salvage pathway; L-methionine from S-methyl-5-thio-alpha-D-ribose 1-phosphate: step 1/6. Its function is as follows. Catalyzes the interconversion of methylthioribose-1-phosphate (MTR-1-P) into methylthioribulose-1-phosphate (MTRu-1-P). The protein is Methylthioribose-1-phosphate isomerase of Bacillus pumilus (strain SAFR-032).